A 271-amino-acid polypeptide reads, in one-letter code: Chorismate dehydratase (271 aa).

This sequence belongs to the MqnA/MqnD family. MqnA subfamily.

The catalysed reaction is chorismate = 3-[(1-carboxyvinyl)-oxy]benzoate + H2O. It participates in quinol/quinone metabolism; menaquinone biosynthesis. Catalyzes the dehydration of chorismate into 3-[(1-carboxyvinyl)oxy]benzoate, a step in the biosynthesis of menaquinone (MK, vitamin K2). The chain is Chorismate dehydratase from Thermus thermophilus (strain ATCC 27634 / DSM 579 / HB8).